Reading from the N-terminus, the 149-residue chain is Calmodulin-2 (149 aa).

N-acetylalanine is present on Ala-2. EF-hand domains follow at residues 8–43 (EQIA…LGQN), 44–79 (PTEA…KMKD), 81–116 (DSEE…LGEK), and 117–149 (LTDE…MTSK). Residues Asp-21, Asp-23, Asp-25, Thr-27, Glu-32, Asp-57, Asp-59, Asn-61, Thr-63, Glu-68, Asp-94, Asp-96, Asn-98, and Glu-105 each contribute to the Ca(2+) site. Lys-116 carries the post-translational modification N6,N6,N6-trimethyllysine. Ca(2+)-binding residues include Asp-130, Asp-132, Asp-134, Gln-136, and Glu-141.

The protein belongs to the calmodulin family.

In terms of biological role, calmodulin mediates the control of a large number of enzymes, ion channels and other proteins by Ca(2+). Among the enzymes to be stimulated by the calmodulin-Ca(2+) complex are a number of protein kinases and phosphatases. This is Calmodulin-2 (CAM2) from Branchiostoma lanceolatum (Common lancelet).